Consider the following 125-residue polypeptide: Succinate dehydrogenase assembly factor 3, mitochondrial (125 aa).

The transit peptide at 1–30 (MPGRHVSRVRALYKRVLQLHRVLPPDLKSL) directs the protein to the mitochondrion.

The protein belongs to the complex I LYR family. SDHAF3 subfamily. In terms of assembly, interacts with SDHB within an SDHA-SDHB subcomplex.

The protein localises to the mitochondrion matrix. Its function is as follows. Plays an essential role in the assembly of succinate dehydrogenase (SDH), an enzyme complex (also referred to as respiratory complex II) that is a component of both the tricarboxylic acid (TCA) cycle and the mitochondrial electron transport chain, and which couples the oxidation of succinate to fumarate with the reduction of ubiquinone (coenzyme Q) to ubiquinol. Promotes maturation of the iron-sulfur protein subunit SDHB of the SDH catalytic dimer, protecting it from the deleterious effects of oxidants. May act together with SDHAF1. The chain is Succinate dehydrogenase assembly factor 3, mitochondrial from Homo sapiens (Human).